We begin with the raw amino-acid sequence, 298 residues long: Tyrosine recombinase XerD (298 aa).

Positions 2-87 constitute a Core-binding (CB) domain; sequence KQDLARIEQF…AVRRLFQYLY (86 aa). Residues 108–292 enclose the Tyr recombinase domain; it reads RLPKDLSEAQ…ATERLRQLHQ (185 aa). Active-site residues include Arg148, Lys172, His244, Arg247, and His270. The O-(3'-phospho-DNA)-tyrosine intermediate role is filled by Tyr279.

Belongs to the 'phage' integrase family. XerD subfamily. Forms a cyclic heterotetrameric complex composed of two molecules of XerC and two molecules of XerD, in which XerC interacts with XerD via its C-terminal region, XerD interacts with XerC via its C-terminal region and so on.

The protein resides in the cytoplasm. Its activity is regulated as follows. FtsK may regulate the catalytic switch between XerC and XerD in the heterotetrameric complex during the two steps of the recombination process. Site-specific tyrosine recombinase, which acts by catalyzing the cutting and rejoining of the recombining DNA molecules. Binds cooperatively to specific DNA consensus sequences that are separated from XerC binding sites by a short central region, forming the heterotetrameric XerC-XerD complex that recombines DNA substrates. The complex is essential to convert dimers of the bacterial chromosome into monomers to permit their segregation at cell division. It also contributes to the segregational stability of plasmids. In the complex XerD specifically exchanges the bottom DNA strands. This chain is Tyrosine recombinase XerD, found in Escherichia coli O157:H7.